We begin with the raw amino-acid sequence, 249 residues long: DNA polymerase sliding clamp 3 (249 aa).

The protein belongs to the PCNA family. In terms of assembly, homotrimer. The subunits circularize to form a toroid; DNA passes through its center. Replication factor C (RFC) is required to load the toroid on the DNA.

Functionally, sliding clamp subunit that acts as a moving platform for DNA processing. Responsible for tethering the catalytic subunit of DNA polymerase and other proteins to DNA during high-speed replication. The protein is DNA polymerase sliding clamp 3 of Aeropyrum pernix (strain ATCC 700893 / DSM 11879 / JCM 9820 / NBRC 100138 / K1).